Here is a 218-residue protein sequence, read N- to C-terminus: ATP-dependent dethiobiotin synthetase BioD (218 aa).

Residue 9 to 15 participates in ATP binding; that stretch reads TNAGKTT. Thr-14 provides a ligand contact to Mg(2+). The active site involves Lys-35. Lys-35 is a phosphate binding site. Thr-39 contacts substrate. Residues Asp-50, Glu-116, and 116–119 each bind ATP; that span reads EGAG. Positions 50 and 116 each coordinate Mg(2+). 116–119 contacts phosphate; the sequence is EGAG. Position 151–154 (151–154) interacts with substrate; it reads GLIN. ATP-binding positions include Asn-175 and 175–177; that span reads NLK.

Belongs to the dethiobiotin synthetase family. In terms of assembly, homodimer. The cofactor is Mg(2+).

The protein localises to the cytoplasm. The catalysed reaction is (7R,8S)-7,8-diammoniononanoate + CO2 + ATP = (4R,5S)-dethiobiotin + ADP + phosphate + 3 H(+). The protein operates within cofactor biosynthesis; biotin biosynthesis; biotin from 7,8-diaminononanoate: step 1/2. Its function is as follows. Catalyzes a mechanistically unusual reaction, the ATP-dependent insertion of CO2 between the N7 and N8 nitrogen atoms of 7,8-diaminopelargonic acid (DAPA, also called 7,8-diammoniononanoate) to form a ureido ring. The chain is ATP-dependent dethiobiotin synthetase BioD from Helicobacter pylori (strain ATCC 700392 / 26695) (Campylobacter pylori).